The following is a 417-amino-acid chain: mRNA cap guanine-N(7) methyltransferase (417 aa).

In terms of domain architecture, mRNA cap 0 methyltransferase spans 129-412 (SPIIKLRNFN…LYTVFAFKKV (284 aa)). 138-139 (NN) provides a ligand contact to mRNA. S-adenosyl-L-methionine contacts are provided by K142, G160, D182, D211, Q237, and Y242.

The protein belongs to the class I-like SAM-binding methyltransferase superfamily. mRNA cap 0 methyltransferase family.

The protein localises to the nucleus. It carries out the reaction a 5'-end (5'-triphosphoguanosine)-ribonucleoside in mRNA + S-adenosyl-L-methionine = a 5'-end (N(7)-methyl 5'-triphosphoguanosine)-ribonucleoside in mRNA + S-adenosyl-L-homocysteine. Its function is as follows. Responsible for methylating the 5'-cap structure of mRNAs. The polypeptide is mRNA cap guanine-N(7) methyltransferase (ABD1) (Candida glabrata (strain ATCC 2001 / BCRC 20586 / JCM 3761 / NBRC 0622 / NRRL Y-65 / CBS 138) (Yeast)).